The chain runs to 151 residues: Ribosome maturation factor RimP (151 aa).

The protein belongs to the RimP family.

The protein localises to the cytoplasm. Functionally, required for maturation of 30S ribosomal subunits. The sequence is that of Ribosome maturation factor RimP from Hydrogenovibrio crunogenus (strain DSM 25203 / XCL-2) (Thiomicrospira crunogena).